Reading from the N-terminus, the 341-residue chain is D-erythrose-4-phosphate dehydrogenase (341 aa).

14-15 (RI) serves as a coordination point for NAD(+). Substrate contacts are provided by residues 156–158 (SCT), Arg202, 215–216 (TR), and Arg238. The Nucleophile role is filled by Cys157. Position 320 (Asn320) interacts with NAD(+).

It belongs to the glyceraldehyde-3-phosphate dehydrogenase family. Epd subfamily. In terms of assembly, homotetramer.

It localises to the cytoplasm. It carries out the reaction D-erythrose 4-phosphate + NAD(+) + H2O = 4-phospho-D-erythronate + NADH + 2 H(+). Its pathway is cofactor biosynthesis; pyridoxine 5'-phosphate biosynthesis; pyridoxine 5'-phosphate from D-erythrose 4-phosphate: step 1/5. Functionally, catalyzes the NAD-dependent conversion of D-erythrose 4-phosphate to 4-phosphoerythronate. In Idiomarina loihiensis (strain ATCC BAA-735 / DSM 15497 / L2-TR), this protein is D-erythrose-4-phosphate dehydrogenase.